A 66-amino-acid chain; its full sequence is Large ribosomal subunit protein uL29 (66 aa).

It belongs to the universal ribosomal protein uL29 family.

This chain is Large ribosomal subunit protein uL29, found in Rhizobium meliloti (strain 1021) (Ensifer meliloti).